The chain runs to 433 residues: Protein RETICULATA-RELATED 1, chloroplastic (433 aa).

The transit peptide at Met-1–Cys-63 directs the protein to the chloroplast. Val-64 is subject to N-acetylvaline. Residues Asp-93–Asp-105 show a composition bias toward acidic residues. The segment at Asp-93 to Lys-143 is disordered. Residues Asn-110–Asp-127 are compositionally biased toward gly residues. The segment covering Gly-128 to Lys-139 has biased composition (acidic residues). 2 helical membrane-spanning segments follow: residues Leu-249–Ala-269 and Leu-323–Ile-343.

It belongs to the RETICULATA family. As to expression, expressed in root vasculature, distal region of young leaf primordia, leaf bundle sheath cells, hydathodes and pollen grains.

It localises to the plastid. The protein localises to the chloroplast membrane. Its function is as follows. May play a role in leaf development. In Arabidopsis thaliana (Mouse-ear cress), this protein is Protein RETICULATA-RELATED 1, chloroplastic.